The primary structure comprises 356 residues: tRNA N6-adenosine threonylcarbamoyltransferase (356 aa).

Residues H116 and H120 each contribute to the Fe cation site. Substrate-binding positions include 139 to 143 (IVSGG), D174, G187, D191, and N281. Residue D309 coordinates Fe cation.

Belongs to the KAE1 / TsaD family. Requires Fe(2+) as cofactor.

Its subcellular location is the cytoplasm. It carries out the reaction L-threonylcarbamoyladenylate + adenosine(37) in tRNA = N(6)-L-threonylcarbamoyladenosine(37) in tRNA + AMP + H(+). In terms of biological role, required for the formation of a threonylcarbamoyl group on adenosine at position 37 (t(6)A37) in tRNAs that read codons beginning with adenine. Is involved in the transfer of the threonylcarbamoyl moiety of threonylcarbamoyl-AMP (TC-AMP) to the N6 group of A37, together with TsaE and TsaB. TsaD likely plays a direct catalytic role in this reaction. The protein is tRNA N6-adenosine threonylcarbamoyltransferase of Frankia alni (strain DSM 45986 / CECT 9034 / ACN14a).